The sequence spans 284 residues: Signal peptidase I (284 aa).

Residues 4-22 (NFPLLLVIAVAVCGALALV) form a helical membrane-spanning segment. The Cytoplasmic portion of the chain corresponds to 23–58 (DLVLFAPRRRAAISSYEGQVNEPDPAVLEKLNKEPL). Residues 59–77 (LVEYGKSFFPVLFIVLVLR) traverse the membrane as a helical segment. Topologically, residues 78–284 (SFLVEPFQIP…PNFSRVGVIH (207 aa)) are periplasmic. Residues serine 90 and lysine 145 contribute to the active site.

Belongs to the peptidase S26 family.

It is found in the cell inner membrane. The enzyme catalyses Cleavage of hydrophobic, N-terminal signal or leader sequences from secreted and periplasmic proteins.. This chain is Signal peptidase I (lepB), found in Pseudomonas aeruginosa (strain ATCC 15692 / DSM 22644 / CIP 104116 / JCM 14847 / LMG 12228 / 1C / PRS 101 / PAO1).